The sequence spans 525 residues: GMP synthase [glutamine-hydrolyzing] (525 aa).

Residues 9 to 207 (RILILDFGSQ…VMDICKCEKL (199 aa)) enclose the Glutamine amidotransferase type-1 domain. C86 functions as the Nucleophile in the catalytic mechanism. Active-site residues include H181 and E183. In terms of domain architecture, GMPS ATP-PPase spans 208-400 (WTAGAIIEDA…LGLPYDMLYR (193 aa)). 235–241 (SGGVDSS) contributes to the ATP binding site.

In terms of assembly, homodimer.

It catalyses the reaction XMP + L-glutamine + ATP + H2O = GMP + L-glutamate + AMP + diphosphate + 2 H(+). The protein operates within purine metabolism; GMP biosynthesis; GMP from XMP (L-Gln route): step 1/1. Functionally, catalyzes the synthesis of GMP from XMP. The protein is GMP synthase [glutamine-hydrolyzing] of Alteromonas mediterranea (strain DSM 17117 / CIP 110805 / LMG 28347 / Deep ecotype).